The sequence spans 385 residues: Leucine aminopeptidase 1 (385 aa).

The signal sequence occupies residues 1-19 (MKFPNLLSLGVAASTTVLA). Residues 20-87 (AVPNQKPIGD…FPRTFAQTTV (68 aa)) constitute a propeptide that is removed on maturation. Asparagine 177 is a glycosylation site (N-linked (GlcNAc...) asparagine). The Zn(2+) site is built by histidine 185, aspartate 204, glutamate 243, and aspartate 270. Cysteine 319 and cysteine 323 are disulfide-bonded. Residue histidine 352 coordinates Zn(2+).

This sequence belongs to the peptidase M28 family. M28E subfamily. Monomer. It depends on Zn(2+) as a cofactor.

It localises to the secreted. Extracellular aminopeptidase that allows assimilation of proteinaceous substrates. This chain is Leucine aminopeptidase 1 (LAP1), found in Ajellomyces capsulatus (strain H88) (Darling's disease fungus).